We begin with the raw amino-acid sequence, 267 residues long: MKPTILLYDSGMGGLTIYDAIRENLPDAHYLYCFDNAYFPYSEKSEAVLIELAVGIVQKIAENYPLDMVVVACNTASTVVLPALRERFAMPIVGTVPAIKPAAQISQTKTIGLLATKGTVTRPYVDELIERYAKDCVVERIGSTDLVEIVEEKQQTGSVDMRRLQKVVEEWQSHPTLDTVILGCTHFPLVKEELQQLLPRVSFFVDPGNGIANRVVSLLQDVKRNVNNENKENQAFCTQNSENFLKREKVMQNWGFKRLNILNFVEK.

Substrate is bound by residues 9–10 (DS) and 41–42 (YS). Cysteine 73 (proton donor/acceptor) is an active-site residue. 74 to 75 (NT) lines the substrate pocket. Catalysis depends on cysteine 184, which acts as the Proton donor/acceptor. Substrate is bound at residue 185–186 (TH).

This sequence belongs to the aspartate/glutamate racemases family.

The catalysed reaction is L-glutamate = D-glutamate. Its pathway is cell wall biogenesis; peptidoglycan biosynthesis. Provides the (R)-glutamate required for cell wall biosynthesis. The chain is Glutamate racemase from Glaesserella parasuis serovar 5 (strain SH0165) (Haemophilus parasuis).